A 233-amino-acid polypeptide reads, in one-letter code: Germin-like protein 3-7 (233 aa).

The first 35 residues, 1-35, serve as a signal peptide directing secretion; that stretch reads MSSSSSMECTGNMSAAPLLVLTVAVLAVLASTCAA. Cysteine 44 and cysteine 63 form a disulfide bridge. One can recognise a Cupin type-1 domain in the interval 77 to 225; it reads AGLAAAGSTD…SFQVDAEIIK (149 aa). The Mn(2+) site is built by histidine 125, histidine 127, glutamate 132, and histidine 171. A glycan (N-linked (GlcNAc...) asparagine) is linked at asparagine 178.

Belongs to the germin family. In terms of assembly, oligomer (believed to be a pentamer but probably hexamer).

It localises to the secreted. The protein resides in the extracellular space. The protein localises to the apoplast. In terms of biological role, may play a role in plant defense. Probably has no oxalate oxidase activity even if the active site is conserved. This is Germin-like protein 3-7 (GER7) from Oryza sativa subsp. japonica (Rice).